The sequence spans 292 residues: Expansin-like protein 6 (292 aa).

The signal sequence occupies residues 1–24; it reads MIKIIYLIVLLVLLFKNNHIIIKA. Residues 25–267 lie on the Extracellular side of the membrane; that stretch reads DDCPFPQIPI…QITSNSNNIL (243 aa). An Expansin-like EG45 domain is found at 47-150; the sequence is HASCGFEKLT…IKVPCPTYGN (104 aa). 2 cysteine pairs are disulfide-bonded: C50/C80 and C83/C145. An N-linked (GlcNAc...) asparagine glycan is attached at N92. The helical transmembrane segment at 268 to 288 threads the bilayer; sequence PPSLYIIFLISILFLIINNIF. The Cytoplasmic portion of the chain corresponds to 289 to 292; that stretch reads SNKY.

It belongs to the expansin family. Expansin A subfamily.

The protein localises to the membrane. May serve to lubricate the movement of the cellulose microfibrils during cell growth and wall extension and/or may serve to maintain the fluid state of the slug cell wall. In Dictyostelium discoideum (Social amoeba), this protein is Expansin-like protein 6 (expl6).